The primary structure comprises 438 residues: Myosin light chain kinase, smooth muscle (438 aa).

A Protein kinase domain is found at F1–L241. K15 serves as a coordination point for ATP. Phosphotyrosine; by ABL1 is present on Y97. D107 serves as the catalytic Proton acceptor. Y157 is modified (phosphotyrosine; by ABL1). A calmodulin-binding region spans residues T233–T296. A phosphoserine mark is found at S281, S282, S294, S295, and S298. Residues M283–E438 are telokin. A disordered region spans residues L289–E309. Residues R292–L303 show a composition bias toward polar residues. The residue at position 300 (T300) is a Phosphothreonine. At S301 the chain carries Phosphoserine. The Ig-like C2-type domain maps to P331–I420. A disulfide bond links C352 and C404.

The protein belongs to the protein kinase superfamily. CAMK Ser/Thr protein kinase family. All isoforms including Telokin bind calmodulin. Interacts with SVIL. Interacts with CTTN; this interaction is reduced during thrombin-induced endothelial cell (EC) contraction but is promoted by the barrier-protective agonist sphingosine 1-phosphate (S1P) within lamellipodia. A complex made of ABL1, CTTN and MYLK regulates cortical actin-based cytoskeletal rearrangement critical to sphingosine 1-phosphate (S1P)-mediated endothelial cell (EC) barrier enhancement. Binds to NAA10/ARD1 and PTK2B/PYK2. Mg(2+) is required as a cofactor. Requires Ca(2+) as cofactor. Post-translationally, the C-terminus is deglutamylated by AGTPBP1/CCP1, AGBL1/CCP4 and AGBL4/CCP6, leading to the formation of Myosin light chain kinase, smooth muscle, deglutamylated form. The consequences of C-terminal deglutamylation are unknown. In terms of processing, can probably be down-regulated by phosphorylation. Tyrosine phosphorylation by ABL1 increases kinase activity, reverses MLCK-mediated inhibition of Arp2/3-mediated actin polymerization, and enhances CTTN-binding. Phosphorylation by SRC promotes CTTN binding.

It is found in the cytoplasm. The protein resides in the cell projection. The protein localises to the lamellipodium. It localises to the cleavage furrow. Its subcellular location is the cytoskeleton. It is found in the stress fiber. The enzyme catalyses L-seryl-[myosin light chain] + ATP = O-phospho-L-seryl-[myosin light chain] + ADP + H(+). It catalyses the reaction L-threonyl-[myosin light chain] + ATP = O-phospho-L-threonyl-[myosin light chain] + ADP + H(+). In terms of biological role, calcium/calmodulin-dependent myosin light chain kinase implicated in smooth muscle contraction via phosphorylation of myosin light chains (MLC). Also regulates actin-myosin interaction through a non-kinase activity. Phosphorylates PTK2B/PYK2 and myosin light-chains. Involved in the inflammatory response (e.g. apoptosis, vascular permeability, leukocyte diapedesis), cell motility and morphology, airway hyperreactivity and other activities relevant to asthma. Required for tonic airway smooth muscle contraction that is necessary for physiological and asthmatic airway resistance. Necessary for gastrointestinal motility. Implicated in the regulation of endothelial as well as vascular permeability, probably via the regulation of cytoskeletal rearrangements. In the nervous system it has been shown to control the growth initiation of astrocytic processes in culture and to participate in transmitter release at synapses formed between cultured sympathetic ganglion cells. Critical participant in signaling sequences that result in fibroblast apoptosis. Plays a role in the regulation of epithelial cell survival. Required for epithelial wound healing, especially during actomyosin ring contraction during purse-string wound closure. Mediates RhoA-dependent membrane blebbing. Triggers TRPC5 channel activity in a calcium-dependent signaling, by inducing its subcellular localization at the plasma membrane. Promotes cell migration (including tumor cells) and tumor metastasis. PTK2B/PYK2 activation by phosphorylation mediates ITGB2 activation and is thus essential to trigger neutrophil transmigration during acute lung injury (ALI). May regulate optic nerve head astrocyte migration. Probably involved in mitotic cytoskeletal regulation. Regulates tight junction probably by modulating ZO-1 exchange in the perijunctional actomyosin ring. Mediates burn-induced microvascular barrier injury; triggers endothelial contraction in the development of microvascular hyperpermeability by phosphorylating MLC. Essential for intestinal barrier dysfunction. Mediates Giardia spp.-mediated reduced epithelial barrier function during giardiasis intestinal infection via reorganization of cytoskeletal F-actin and tight junctional ZO-1. Necessary for hypotonicity-induced Ca(2+) entry and subsequent activation of volume-sensitive organic osmolyte/anion channels (VSOAC) in cervical cancer cells. The chain is Myosin light chain kinase, smooth muscle (MYLK) from Ovis aries (Sheep).